The sequence spans 189 residues: Crossover junction endodeoxyribonuclease RuvC (189 aa).

Active-site residues include Asp12, Glu72, and Asp147. 3 residues coordinate Mg(2+): Asp12, Glu72, and Asp147.

The protein belongs to the RuvC family. As to quaternary structure, homodimer which binds Holliday junction (HJ) DNA. The HJ becomes 2-fold symmetrical on binding to RuvC with unstacked arms; it has a different conformation from HJ DNA in complex with RuvA. In the full resolvosome a probable DNA-RuvA(4)-RuvB(12)-RuvC(2) complex forms which resolves the HJ. Mg(2+) is required as a cofactor.

Its subcellular location is the cytoplasm. It catalyses the reaction Endonucleolytic cleavage at a junction such as a reciprocal single-stranded crossover between two homologous DNA duplexes (Holliday junction).. The RuvA-RuvB-RuvC complex processes Holliday junction (HJ) DNA during genetic recombination and DNA repair. Endonuclease that resolves HJ intermediates. Cleaves cruciform DNA by making single-stranded nicks across the HJ at symmetrical positions within the homologous arms, yielding a 5'-phosphate and a 3'-hydroxyl group; requires a central core of homology in the junction. The consensus cleavage sequence is 5'-(A/T)TT(C/G)-3'. Cleavage occurs on the 3'-side of the TT dinucleotide at the point of strand exchange. HJ branch migration catalyzed by RuvA-RuvB allows RuvC to scan DNA until it finds its consensus sequence, where it cleaves and resolves the cruciform DNA. This is Crossover junction endodeoxyribonuclease RuvC from Porphyromonas gingivalis (strain ATCC BAA-308 / W83).